Here is a 205-residue protein sequence, read N- to C-terminus: Urease accessory protein UreG (205 aa).

14–21 (GPVGSGKT) lines the GTP pocket.

Belongs to the SIMIBI class G3E GTPase family. UreG subfamily. In terms of assembly, homodimer. UreD, UreF and UreG form a complex that acts as a GTP-hydrolysis-dependent molecular chaperone, activating the urease apoprotein by helping to assemble the nickel containing metallocenter of UreC. The UreE protein probably delivers the nickel.

The protein localises to the cytoplasm. Functionally, facilitates the functional incorporation of the urease nickel metallocenter. This process requires GTP hydrolysis, probably effectuated by UreG. This chain is Urease accessory protein UreG, found in Proteus mirabilis (strain HI4320).